The chain runs to 74 residues: Mitotic-spindle organizing protein 1 (74 aa).

The protein belongs to the MOZART1 family. Part of the gamma-tubulin complex.

It is found in the cytoplasm. It localises to the cytoskeleton. The protein resides in the microtubule organizing center. The protein localises to the spindle pole body. Functionally, required for gamma-tubulin complex recruitment to the microtubule organizing center (MTOC). The polypeptide is Mitotic-spindle organizing protein 1 (Emericella nidulans (strain FGSC A4 / ATCC 38163 / CBS 112.46 / NRRL 194 / M139) (Aspergillus nidulans)).